Reading from the N-terminus, the 271-residue chain is uncharacterized protein (271 aa).

The tract at residues 233–261 (VEPDPNRFSEPVDQPTLVEEGKEARRTER) is disordered. The span at 251–261 (EEGKEARRTER) shows a compositional bias: basic and acidic residues.

Functionally, may be involved in swimming motility. This is an uncharacterized protein from Haloferax volcanii (strain ATCC 29605 / DSM 3757 / JCM 8879 / NBRC 14742 / NCIMB 2012 / VKM B-1768 / DS2) (Halobacterium volcanii).